Consider the following 84-residue polypeptide: Dolichol phosphate-mannose biosynthesis regulatory protein (84 aa).

The next 2 membrane-spanning stretches (helical) occupy residues 11-31 (FGLV…VILL) and 49-69 (YAVL…GLFI).

The protein belongs to the DPM2 family. In terms of assembly, component of the dolichol-phosphate mannose (DPM) synthase complex composed of DPM1, DPM2 and DPM3; in the complex interacts directly with DPM3. Component of the glycosylphosphatidylinositol-N-acetylglucosaminyltransferase (GPI-GnT) complex composed at least by PIGA, PIGC, PIGH, PIGP, PIGQ, PIGY and DPM2. Interacts with PIGA, PIGC and PIGQ.

Its subcellular location is the endoplasmic reticulum membrane. It functions in the pathway protein modification; protein glycosylation. Regulates the biosynthesis of dolichol phosphate-mannose. Regulatory subunit of the dolichol-phosphate mannose (DPM) synthase complex; essential for the ER localization and stable expression of DPM1. Part of the glycosylphosphatidylinositol-N-acetylglucosaminyltransferase (GPI-GnT) complex that catalyzes the transfer of N-acetylglucosamine from UDP-N-acetylglucosamine to phosphatidylinositol and participates in the first step of GPI biosynthesis. May act by regulating the GPI-GNT complex. The protein is Dolichol phosphate-mannose biosynthesis regulatory protein of Rattus norvegicus (Rat).